The sequence spans 450 residues: Molybdate-anion transporter (450 aa).

12 helical membrane-spanning segments follow: residues 1-21, 43-63, 79-99, 128-148, 174-194, 195-215, 249-269, 278-298, 311-331, 344-364, 376-396, and 409-429; these read MLVT…GLEL, LDFY…APYL, ILYV…SSLV, FVLL…FSAF, AAFW…AVAS, WIGL…ALAG, VLLL…FVFL, GAPL…GSSL, PMHL…MLTF, FIAF…MSFL, GVLN…LLVL, and FSIC…LFTV.

It belongs to the major facilitator superfamily. In terms of tissue distribution, expressed ubiquitously but at relatively higher levels in the olfactory bulb and the skeletal muscle.

It is found in the cell membrane. In terms of biological role, mediates high-affinity intracellular uptake of the rare oligo-element molybdenum. The protein is Molybdate-anion transporter (MFSD5) of Homo sapiens (Human).